A 186-amino-acid polypeptide reads, in one-letter code: Peptidoglycan-recognition protein SD (186 aa).

Residues 1-18 (MTWIGLLIVGLTAIAVQG) form the signal peptide. Residues 47-169 (AVIAHTAGGA…RQVSATMSPG (123 aa)) enclose the N-acetylmuramoyl-L-alanine amidase domain. Cysteine 57 and cysteine 63 form a disulfide bridge. Asparagine 181 is a glycosylation site (N-linked (GlcNAc...) asparagine).

Belongs to the N-acetylmuramoyl-L-alanine amidase 2 family.

It is found in the secreted. Peptidoglycan-recognition protein that plays a key role in innate immunity by binding to peptidoglycans (PGN) of Gram-positive bacteria and activating the Toll pathway. Has no activity against on Gram-negative bacteria and fungi. Shows some partial redundancy with PRPGP-SA in Gram-positive bacteria recognition. May act by activating the proteolytic cleavage of Spatzle and the subsequent activation of Toll pathway. Recognizes S.aureus PGN. This chain is Peptidoglycan-recognition protein SD (PGRP-SD), found in Drosophila simulans (Fruit fly).